The sequence spans 301 residues: Pyridoxal 5'-phosphate synthase subunit PdxS (301 aa).

Position 31 (aspartate 31) interacts with D-ribose 5-phosphate. Catalysis depends on lysine 88, which acts as the Schiff-base intermediate with D-ribose 5-phosphate. D-ribose 5-phosphate is bound at residue glycine 160. D-glyceraldehyde 3-phosphate is bound at residue lysine 172. D-ribose 5-phosphate is bound by residues glycine 221 and 242-243 (GS).

This sequence belongs to the PdxS/SNZ family. As to quaternary structure, in the presence of PdxT, forms a dodecamer of heterodimers.

It carries out the reaction aldehydo-D-ribose 5-phosphate + D-glyceraldehyde 3-phosphate + L-glutamine = pyridoxal 5'-phosphate + L-glutamate + phosphate + 3 H2O + H(+). Its pathway is cofactor biosynthesis; pyridoxal 5'-phosphate biosynthesis. Functionally, catalyzes the formation of pyridoxal 5'-phosphate from ribose 5-phosphate (RBP), glyceraldehyde 3-phosphate (G3P) and ammonia. The ammonia is provided by the PdxT subunit. Can also use ribulose 5-phosphate and dihydroxyacetone phosphate as substrates, resulting from enzyme-catalyzed isomerization of RBP and G3P, respectively. The chain is Pyridoxal 5'-phosphate synthase subunit PdxS from Methanosarcina acetivorans (strain ATCC 35395 / DSM 2834 / JCM 12185 / C2A).